Consider the following 165-residue polypeptide: 3-isopropylmalate dehydratase small subunit (165 aa).

This sequence belongs to the LeuD family. LeuD type 2 subfamily. Heterodimer of LeuC and LeuD.

It carries out the reaction (2R,3S)-3-isopropylmalate = (2S)-2-isopropylmalate. It functions in the pathway amino-acid biosynthesis; L-leucine biosynthesis; L-leucine from 3-methyl-2-oxobutanoate: step 2/4. In terms of biological role, catalyzes the isomerization between 2-isopropylmalate and 3-isopropylmalate, via the formation of 2-isopropylmaleate. This Saccharolobus islandicus (strain M.14.25 / Kamchatka #1) (Sulfolobus islandicus) protein is 3-isopropylmalate dehydratase small subunit.